A 248-amino-acid chain; its full sequence is Methyl-coenzyme M reductase subunit gamma (248 aa).

Arg-121 contacts coenzyme M.

It belongs to the methyl-coenzyme M reductase gamma subunit family. As to quaternary structure, MCR is a hexamer of two alpha, two beta, and two gamma chains, forming a dimer of heterotrimers. Requires coenzyme F430 as cofactor.

It is found in the cytoplasm. The catalysed reaction is coenzyme B + methyl-coenzyme M = methane + coenzyme M-coenzyme B heterodisulfide. It functions in the pathway one-carbon metabolism; methyl-coenzyme M reduction; methane from methyl-coenzyme M: step 1/1. Its function is as follows. Component of the methyl-coenzyme M reductase (MCR) I that catalyzes the reductive cleavage of methyl-coenzyme M (CoM-S-CH3 or 2-(methylthio)ethanesulfonate) using coenzyme B (CoB or 7-mercaptoheptanoylthreonine phosphate) as reductant which results in the production of methane and the mixed heterodisulfide of CoB and CoM (CoM-S-S-CoB). This is the final step in methanogenesis. The chain is Methyl-coenzyme M reductase subunit gamma (mcrG) from Methanosarcina barkeri (strain Fusaro / DSM 804).